The primary structure comprises 186 residues: Acireductone dioxygenase (186 aa).

The Fe(2+) site is built by histidine 103, histidine 105, glutamate 109, and histidine 147. Histidine 103, histidine 105, glutamate 109, and histidine 147 together coordinate Ni(2+).

It belongs to the acireductone dioxygenase (ARD) family. As to quaternary structure, monomer. The cofactor is Fe(2+). Requires Ni(2+) as cofactor.

The catalysed reaction is 1,2-dihydroxy-5-(methylsulfanyl)pent-1-en-3-one + O2 = 3-(methylsulfanyl)propanoate + CO + formate + 2 H(+). It catalyses the reaction 1,2-dihydroxy-5-(methylsulfanyl)pent-1-en-3-one + O2 = 4-methylsulfanyl-2-oxobutanoate + formate + 2 H(+). The protein operates within amino-acid biosynthesis; L-methionine biosynthesis via salvage pathway; L-methionine from S-methyl-5-thio-alpha-D-ribose 1-phosphate: step 5/6. Its function is as follows. Catalyzes 2 different reactions between oxygen and the acireductone 1,2-dihydroxy-3-keto-5-methylthiopentene (DHK-MTPene) depending upon the metal bound in the active site. Fe-containing acireductone dioxygenase (Fe-ARD) produces formate and 2-keto-4-methylthiobutyrate (KMTB), the alpha-ketoacid precursor of methionine in the methionine recycle pathway. Ni-containing acireductone dioxygenase (Ni-ARD) produces methylthiopropionate, carbon monoxide and formate, and does not lie on the methionine recycle pathway. The protein is Acireductone dioxygenase of Synechococcus sp. (strain CC9605).